A 610-amino-acid chain; its full sequence is Solute carrier family 2, facilitated glucose transporter member 12 (610 aa).

The Cytoplasmic portion of the chain corresponds to 1–49; sequence MDAPEESIRMTSDPQSKIYVQNPDTHIHLEQGPSAKSGNGRALVLCSVS. A helical transmembrane segment spans residues 50–70; it reads VACLSGLLMGYEMSLISGALL. At 71–84 the chain is on the extracellular side; sequence QLRDVLTLSCPEQE. The helical transmembrane segment at 85–105 threads the bilayer; the sequence is QVVGSLLLGAFLLSLGGGTIL. The Cytoplasmic portion of the chain corresponds to 106-118; it reads DHYGRRFTIILTA. Residues 119-139 form a helical membrane-spanning segment; that stretch reads LLCVLGTLLSVCVVSFWALVV. Over 140–141 the chain is Extracellular; it reads GR. Residues 142–162 traverse the membrane as a helical segment; that stretch reads MLVGMSVALSGTASCLYAAEV. The Cytoplasmic portion of the chain corresponds to 163–176; sequence APAAWRGRCVCVYE. The helical transmembrane segment at 177 to 197 threads the bilayer; sequence LMVVLGMLLGFGLSWAFAGVP. Residues 198-201 are Extracellular-facing; the sequence is DGWR. Residues 202 to 222 form a helical membrane-spanning segment; it reads FTFGGALLPALLQAGVMPLLP. At 223–286 the chain is on the cytoplasmic side; the sequence is DSPRFLLAQQ…FQSRDNMLQR (64 aa). Residues 287-307 traverse the membrane as a helical segment; it reads LLVGAALVFLQQATGQPNILA. Over 308 to 325 the chain is Extracellular; that stretch reads YASTVLSSVGFHGNEAAT. A helical transmembrane segment spans residues 326–346; that stretch reads LASTGFGVVKVGGTIPAIFLV. The Cytoplasmic segment spans residues 347–353; the sequence is DKVGPKA. Residues 354–374 traverse the membrane as a helical segment; that stretch reads LLCVGVVVMMLSTATLGAITM. Over 375–475 the chain is Extracellular; that stretch reads QSRTHVSSLC…LHEVSPSLKW (101 aa). N-linked (GlcNAc...) asparagine glycans are attached at residues asparagine 392, asparagine 429, and asparagine 438. A helical membrane pass occupies residues 476–496; sequence ISLVSLLVYVAGFSISLGPMV. Residues 497–511 are Cytoplasmic-facing; the sequence is HVVLSAIFPTGIRGK. Residues 512-532 form a helical membrane-spanning segment; sequence AVSVISAFNWATNLLISMTFL. Topologically, residues 533-542 are extracellular; sequence TLTERIGLPT. Residues 543–563 traverse the membrane as a helical segment; sequence VIFSYSAMSFLLVVFVIVFVP. The Cytoplasmic segment spans residues 564-610; sequence ETKGRSLEQISKELAMKNHLRGTLLCHRRKHKATAQPSQEEKALATV.

The protein belongs to the major facilitator superfamily. Sugar transporter (TC 2.A.1.1) family. Glucose transporter subfamily. In terms of tissue distribution, expressed in the main insulin-sensitive tissues, such as cardiac muscle, skeletal muscle and adipose tissue.

It localises to the cell membrane. It is found in the endomembrane system. The protein localises to the cytoplasm. Its subcellular location is the perinuclear region. The enzyme catalyses D-glucose(out) = D-glucose(in). Its function is as follows. Insulin-regulated facilitative glucose transporter. The chain is Solute carrier family 2, facilitated glucose transporter member 12 from Danio rerio (Zebrafish).